The primary structure comprises 451 residues: Protein NINJA homolog 1 (451 aa).

Disordered stretches follow at residues 1–223, 321–346, and 427–451; these read MDDE…QGNP, ISQA…DDKK, and DAPG…SAQN. Basic and acidic residues predominate over residues 23–35; it reads KARDAPLEPKAEP. Composition is skewed to polar residues over residues 38–49, 86–103, and 143–153; these read EESSSKGVSQTP, PGSS…QKPV, and ISISTDDGSTG. Residues 154–163 show a composition bias toward acidic residues; that stretch reads ENEDVAESEA. Residues 207–216 are compositionally biased toward low complexity; that stretch reads SFSGSESSSG.

The protein belongs to the Ninja family. Interacts with TIFY10C/JAZ8. Interacts with TIFY11A/JAZ9.

The protein resides in the nucleus. In Oryza sativa subsp. japonica (Rice), this protein is Protein NINJA homolog 1.